We begin with the raw amino-acid sequence, 541 residues long: Myrosinase 1 (541 aa).

The signal sequence occupies residues 1–19 (MKLLMLAFVFLLALATCKG). Intrachain disulfides connect cysteine 24-cysteine 449, cysteine 32-cysteine 445, and cysteine 224-cysteine 232. An N-linked (GlcNAc...) asparagine glycan is attached at asparagine 33. Glutamine 57 serves as a coordination point for a beta-D-glucoside. Asparagine 108 carries N-linked (GlcNAc...) asparagine glycosylation. Histidine 159 contributes to the a beta-D-glucoside binding site. N-linked (GlcNAc...) asparagine glycosylation is present at asparagine 175. 204–205 (NQ) provides a ligand contact to a beta-D-glucoside. An N-linked (GlcNAc...) asparagine glycan is attached at asparagine 236. A beta-D-glucoside is bound at residue tyrosine 348. 2 N-linked (GlcNAc...) asparagine glycosylation sites follow: asparagine 356 and asparagine 379. A beta-D-glucoside is bound by residues glutamate 420, tryptophan 468, 475–476 (EF), and phenylalanine 484. Catalysis depends on glutamate 420, which acts as the Nucleophile. N-linked (GlcNAc...) asparagine glycans are attached at residues asparagine 493 and asparagine 512.

Belongs to the glycosyl hydrolase 1 family. As to quaternary structure, homodimer. Expressed in guard cells, phloem-associated cells and myrosin cells.

The protein localises to the vacuole. The enzyme catalyses a thioglucoside + H2O = a sugar + a thiol.. The catalysed reaction is Hydrolysis of terminal, non-reducing beta-D-glucosyl residues with release of beta-D-glucose.. In terms of biological role, degradation of glucosinolates (glucose residue linked by a thioglucoside bound to an amino acid derivative) to glucose, sulfate and any of the products: thiocyanates, isothiocyanates, nitriles, epithionitriles or oxazolidine-2-thiones. These toxic degradation products can deter insect herbivores. Seems to function in abscisic acid (ABA) and methyl jasmonate (MeJA) signaling in guard cells. Functionally redundant with TGG2. Hydrolyzes sinigrin and, with lower efficiency, p-nitrophenyl beta-D-glucoside. This Arabidopsis thaliana (Mouse-ear cress) protein is Myrosinase 1.